A 460-amino-acid chain; its full sequence is GTPase Der (460 aa).

2 consecutive EngA-type G domains span residues 2 to 164 (QSII…HEEF) and 196 to 368 (IRVG…ENFT). Residues 8–15 (GKPNVGKS), 55–59 (DSGGL), 116–119 (NKVD), 202–209 (GRVNVGKS), 249–253 (DTAGI), and 313–316 (NKWD) each bind GTP. The 85-residue stretch at 369–453 (QKIQTSKLNT…PLVIASRKKG (85 aa)) folds into the KH-like domain.

The protein belongs to the TRAFAC class TrmE-Era-EngA-EngB-Septin-like GTPase superfamily. EngA (Der) GTPase family. Associates with the 50S ribosomal subunit.

GTPase that plays an essential role in the late steps of ribosome biogenesis. This chain is GTPase Der, found in Campylobacter jejuni subsp. jejuni serotype O:6 (strain 81116 / NCTC 11828).